We begin with the raw amino-acid sequence, 159 residues long: ATP synthase subunit b 2 (159 aa).

Residues 1-21 (MDATFWAFIALVIFVAIVVYM) form a helical membrane-spanning segment.

Belongs to the ATPase B chain family. In terms of assembly, F-type ATPases have 2 components, F(1) - the catalytic core - and F(0) - the membrane proton channel. F(1) has five subunits: alpha(3), beta(3), gamma(1), delta(1), epsilon(1). F(0) has three main subunits: a(1), b(2) and c(10-14). The alpha and beta chains form an alternating ring which encloses part of the gamma chain. F(1) is attached to F(0) by a central stalk formed by the gamma and epsilon chains, while a peripheral stalk is formed by the delta and b chains.

It localises to the cell inner membrane. Functionally, f(1)F(0) ATP synthase produces ATP from ADP in the presence of a proton or sodium gradient. F-type ATPases consist of two structural domains, F(1) containing the extramembraneous catalytic core and F(0) containing the membrane proton channel, linked together by a central stalk and a peripheral stalk. During catalysis, ATP synthesis in the catalytic domain of F(1) is coupled via a rotary mechanism of the central stalk subunits to proton translocation. Its function is as follows. Component of the F(0) channel, it forms part of the peripheral stalk, linking F(1) to F(0). This is ATP synthase subunit b 2 from Brucella abortus (strain S19).